The following is a 91-amino-acid chain: MAHTRAHVFVSGRVQGVYYRATTRERAQDQGVNGWVRNLDDGRVEAVFEGPDADVEAMVEFCHEGSERANVTDVEVEYEDPEGVDGFEVRW.

The 87-residue stretch at 5–91 (RAHVFVSGRV…EGVDGFEVRW (87 aa)) folds into the Acylphosphatase-like domain. Catalysis depends on residues arginine 20 and asparagine 38.

Belongs to the acylphosphatase family.

The enzyme catalyses an acyl phosphate + H2O = a carboxylate + phosphate + H(+). This is Acylphosphatase (acyP) from Haloarcula marismortui (strain ATCC 43049 / DSM 3752 / JCM 8966 / VKM B-1809) (Halobacterium marismortui).